The primary structure comprises 214 residues: Protein PAM68, chloroplastic (214 aa).

Disordered stretches follow at residues 1–26 and 62–111; these read MASV…NNKQ and ATMN…ERGV. The N-terminal 35 residues, 1 to 35, are a transit peptide targeting the chloroplast; that stretch reads MASVPCSFKLSAHRRSSSKLDGNNKQCSSLVERLR. Residues 36–124 lie on the Stromal side of the membrane; the sequence is DKTKSQVPKS…IVTNRMISRM (89 aa). Basic residues predominate over residues 75-84; sequence KKTKKSKKPK. Over residues 89-106 the composition is skewed to acidic residues; it reads SDEDDDDEDEDDDDEEDE. The helical transmembrane segment at 125–145 threads the bilayer; the sequence is GFTVGLPLFIGLLFFPFFYYL. The Lumenal, thylakoid portion of the chain corresponds to 146–152; it reads KVGLKVD. The helical transmembrane segment at 153 to 173 threads the bilayer; it reads VPTWVPFIVSFVFFGTALAGV. Topologically, residues 174–214 are stromal; the sequence is SYGIVSSSWDPLREGSLLGWNEAKKNWPVFWQSFWNSSDKR.

Interacts with the PSII subunits psbA, psbB, psbC, psbD, psbH and psbI, but not with psbE, psbF or psbO. Interacts with the PSII assembly factors HCF136, LPA1, LPA2 and ALB3.

It localises to the plastid. Its subcellular location is the chloroplast thylakoid membrane. Functionally, involved in early steps in photosystem II (PSII) biogenesis and in maturation and stability of newly synthesized psbA protein. The sequence is that of Protein PAM68, chloroplastic (PAM68) from Arabidopsis thaliana (Mouse-ear cress).